The following is a 216-amino-acid chain: Large ribosomal subunit protein uL3 (216 aa).

Disordered regions lie at residues 89-108 (QRAS…VGGF) and 139-158 (NTHG…QCQS). N5-methylglutamine is present on Gln-157.

Belongs to the universal ribosomal protein uL3 family. Part of the 50S ribosomal subunit. Forms a cluster with proteins L14 and L19. Post-translationally, methylated by PrmB.

Functionally, one of the primary rRNA binding proteins, it binds directly near the 3'-end of the 23S rRNA, where it nucleates assembly of the 50S subunit. This is Large ribosomal subunit protein uL3 from Halorhodospira halophila (strain DSM 244 / SL1) (Ectothiorhodospira halophila (strain DSM 244 / SL1)).